The chain runs to 424 residues: Serine--tRNA ligase (424 aa).

An L-serine-binding site is contributed by 228–230 (TAE). An ATP-binding site is contributed by 259–261 (RSE). Glu282 serves as a coordination point for L-serine. Position 346 to 349 (346 to 349 (EISS)) interacts with ATP. An L-serine-binding site is contributed by Ser382.

This sequence belongs to the class-II aminoacyl-tRNA synthetase family. Type-1 seryl-tRNA synthetase subfamily. In terms of assembly, homodimer. The tRNA molecule binds across the dimer.

Its subcellular location is the cytoplasm. The catalysed reaction is tRNA(Ser) + L-serine + ATP = L-seryl-tRNA(Ser) + AMP + diphosphate + H(+). It carries out the reaction tRNA(Sec) + L-serine + ATP = L-seryl-tRNA(Sec) + AMP + diphosphate + H(+). It participates in aminoacyl-tRNA biosynthesis; selenocysteinyl-tRNA(Sec) biosynthesis; L-seryl-tRNA(Sec) from L-serine and tRNA(Sec): step 1/1. Its function is as follows. Catalyzes the attachment of serine to tRNA(Ser). Is also able to aminoacylate tRNA(Sec) with serine, to form the misacylated tRNA L-seryl-tRNA(Sec), which will be further converted into selenocysteinyl-tRNA(Sec). This Rhodospirillum centenum (strain ATCC 51521 / SW) protein is Serine--tRNA ligase.